The primary structure comprises 59 residues: Large ribosomal subunit protein uL30 (59 aa).

This sequence belongs to the universal ribosomal protein uL30 family. Part of the 50S ribosomal subunit.

In Photorhabdus laumondii subsp. laumondii (strain DSM 15139 / CIP 105565 / TT01) (Photorhabdus luminescens subsp. laumondii), this protein is Large ribosomal subunit protein uL30.